A 435-amino-acid polypeptide reads, in one-letter code: Citrate synthase (435 aa).

Residues His-311 and Asp-370 contribute to the active site.

It belongs to the citrate synthase family.

The catalysed reaction is oxaloacetate + acetyl-CoA + H2O = citrate + CoA + H(+). Its pathway is carbohydrate metabolism; tricarboxylic acid cycle; isocitrate from oxaloacetate: step 1/2. This Rickettsia bellii (strain RML369-C) protein is Citrate synthase (gltA).